A 211-amino-acid polypeptide reads, in one-letter code: dITP/XTP pyrophosphatase (211 aa).

13 to 18 (THNPGK) is a substrate binding site. Asp-45 and Asp-74 together coordinate Mg(2+). Asp-74 functions as the Proton acceptor in the catalytic mechanism. Substrate is bound by residues Ser-75, 160-163 (FGYD), Lys-183, and 195-196 (HR).

This sequence belongs to the HAM1 NTPase family. Homodimer. The cofactor is Mg(2+).

The enzyme catalyses XTP + H2O = XMP + diphosphate + H(+). It catalyses the reaction dITP + H2O = dIMP + diphosphate + H(+). It carries out the reaction ITP + H2O = IMP + diphosphate + H(+). Functionally, pyrophosphatase that catalyzes the hydrolysis of nucleoside triphosphates to their monophosphate derivatives, with a high preference for the non-canonical purine nucleotides XTP (xanthosine triphosphate), dITP (deoxyinosine triphosphate) and ITP. Seems to function as a house-cleaning enzyme that removes non-canonical purine nucleotides from the nucleotide pool, thus preventing their incorporation into DNA/RNA and avoiding chromosomal lesions. The protein is dITP/XTP pyrophosphatase of Bradyrhizobium diazoefficiens (strain JCM 10833 / BCRC 13528 / IAM 13628 / NBRC 14792 / USDA 110).